A 426-amino-acid polypeptide reads, in one-letter code: uncharacterized protein (426 aa).

This is an uncharacterized protein from Acidianus filamentous virus 1 (isolate United States/Yellowstone) (AFV-1).